Here is a 63-residue protein sequence, read N- to C-terminus: MPFAQIYMIEGRTEAQKKAVIEKVSQALVEATGAPMANVRVWIQEVPKENWGIAGVSAKELGR.

P2 (proton acceptor; via imino nitrogen) is an active-site residue.

The protein belongs to the 4-oxalocrotonate tautomerase family. In terms of assembly, homohexamer.

It carries out the reaction (2Z,4E)-2-hydroxyhexa-2,4-dienedioate = (3E)-2-oxohex-3-enedioate. It functions in the pathway aromatic compound metabolism; salicylate degradation. Catalyzes the ketonization of 2-hydroxymuconate stereoselectively to yield 2-oxo-3-hexenedioate. The protein is 2-hydroxymuconate tautomerase (tdnL) of Pseudomonas putida (Arthrobacter siderocapsulatus).